Here is a 279-residue protein sequence, read N- to C-terminus: Formamidopyrimidine-DNA glycosylase (279 aa).

Pro-2 (schiff-base intermediate with DNA) is an active-site residue. Catalysis depends on Glu-3, which acts as the Proton donor. Lys-58 (proton donor; for beta-elimination activity) is an active-site residue. Residues His-92, Arg-111, and Arg-153 each contribute to the DNA site. Residues 238 to 272 form an FPG-type zinc finger; that stretch reads TVYGKEGQSCLSCSSTIIKTKHSGRSTFYCKTCQY. The Proton donor; for delta-elimination activity role is filled by Arg-262.

The protein belongs to the FPG family. As to quaternary structure, monomer. It depends on Zn(2+) as a cofactor.

It carries out the reaction Hydrolysis of DNA containing ring-opened 7-methylguanine residues, releasing 2,6-diamino-4-hydroxy-5-(N-methyl)formamidopyrimidine.. It catalyses the reaction 2'-deoxyribonucleotide-(2'-deoxyribose 5'-phosphate)-2'-deoxyribonucleotide-DNA = a 3'-end 2'-deoxyribonucleotide-(2,3-dehydro-2,3-deoxyribose 5'-phosphate)-DNA + a 5'-end 5'-phospho-2'-deoxyribonucleoside-DNA + H(+). In terms of biological role, involved in base excision repair of DNA damaged by oxidation or by mutagenic agents. Acts as a DNA glycosylase that recognizes and removes damaged bases. Has a preference for oxidized purines, such as 7,8-dihydro-8-oxoguanine (8-oxoG). Has AP (apurinic/apyrimidinic) lyase activity and introduces nicks in the DNA strand. Cleaves the DNA backbone by beta-delta elimination to generate a single-strand break at the site of the removed base with both 3'- and 5'-phosphates. The protein is Formamidopyrimidine-DNA glycosylase of Rickettsia massiliae (strain Mtu5).